The following is a 106-amino-acid chain: Replication restart protein PriB (106 aa).

In terms of domain architecture, SSB spans 4–103 (VNRLVLSGTV…LHAEQIELID (100 aa)).

The protein belongs to the PriB family. As to quaternary structure, homodimer. Interacts with PriA and DnaT. Component of the replication restart primosome. Primosome assembly occurs via a 'hand-off' mechanism. PriA binds to replication forks, subsequently PriB then DnaT bind; DnaT then displaces ssDNA to generate the helicase loading substrate.

Involved in the restart of stalled replication forks, which reloads the replicative helicase on sites other than the origin of replication; the PriA-PriB pathway is the major replication restart pathway. During primosome assembly it facilitates complex formation between PriA and DnaT on DNA; stabilizes PriA on DNA. Stimulates the DNA unwinding activity of PriA helicase. This Pectobacterium carotovorum subsp. carotovorum (strain PC1) protein is Replication restart protein PriB.